A 533-amino-acid polypeptide reads, in one-letter code: SH3 and F-BAR domain-containing protein DDB_G0271676 (533 aa).

The region spanning 5–258 is the F-BAR domain; that stretch reads RQFSEDLWDK…GIESIDRERD (254 aa). Positions 76 to 186 form a coiled coil; sequence REQLELIGAL…ADKGDNEYRE (111 aa). 2 stretches are compositionally biased toward basic and acidic residues: residues 126 to 155 and 162 to 184; these read LKTA…EDLS and KEQK…DNEY. Disordered regions lie at residues 126–184 and 301–405; these read LKTA…DNEY and SRKS…INSN. Low complexity-rich tracts occupy residues 318-327, 340-360, 372-385, and 392-405; these read SIISSPQQPQ, NIII…NNSN, PQQQ…QLNN, and SLSK…INSN. 2 SH3 domains span residues 406 to 468 and 476 to 533; these read SNGE…DSSD and VAGR…VQVI.

The chain is SH3 and F-BAR domain-containing protein DDB_G0271676 from Dictyostelium discoideum (Social amoeba).